A 1218-amino-acid polypeptide reads, in one-letter code: ATP-dependent helicase/deoxyribonuclease subunit B (1218 aa).

In terms of domain architecture, UvrD-like helicase ATP-binding spans 1–279 (MRFIVGRAGT…VFLTETHRFE (279 aa)). 6–13 (GRAGTGKS) lines the ATP pocket. A UvrD-like helicase C-terminal domain is found at 281 to 588 (AGLKHLERFY…LVGSLDRSRN (308 aa)). Residue Cys786 coordinates [4Fe-4S] cluster. A disordered region spans residues 987 to 1006 (LAEGSKGSEGSEGSEDSEDS). [4Fe-4S] cluster is bound by residues Cys1126, Cys1129, and Cys1135. Residues 1160–1169 (RVQSQDSEQY) are compositionally biased toward polar residues. Positions 1160–1218 (RVQSQDSEQYPEQHPPTSVPGETSRRALQKDGGNSPRGQELIWLGEDEAGAGKEDDGHE) are disordered. The span at 1209-1218 (GAGKEDDGHE) shows a compositional bias: basic and acidic residues.

This sequence belongs to the helicase family. AddB/RexB type 1 subfamily. In terms of assembly, heterodimer of AddA and AddB. The cofactor is Mg(2+). Requires [4Fe-4S] cluster as cofactor.

In terms of biological role, the heterodimer acts as both an ATP-dependent DNA helicase and an ATP-dependent, dual-direction single-stranded exonuclease. Recognizes the chi site generating a DNA molecule suitable for the initiation of homologous recombination. The AddB subunit has 5' -&gt; 3' nuclease activity but not helicase activity. This is ATP-dependent helicase/deoxyribonuclease subunit B from Desulfitobacterium hafniense (strain DSM 10664 / DCB-2).